We begin with the raw amino-acid sequence, 293 residues long: MFTGSIVALITPMDDNGDVDRASLKSLIDYHVASGTAAIVSVGTTGESATLNHDEHVDVVMQTLELAGGRIPVIAGTGANSTSEAISLTQRFNDTGVVGCLTVTPYYNRPMQEGLYQHFKAIAESTDLPQILYNVPSRTGCDMLPPTIARLAKIKNIVAVKEATGNLSRVSQIQVLVDDEDFILLSGDDASGLDFMQLGGKGVISVTANIAAREMVELCALAAQGNFAEGRRLNQRLMPLHQHLFVEANPIPVKWAAKRLGLMANDTMRLPMTPLTDPAKRIVEDALKSAGLL.

T45 contacts pyruvate. Residue Y133 is the Proton donor/acceptor of the active site. K161 acts as the Schiff-base intermediate with substrate in catalysis. Residue I204 participates in pyruvate binding.

Belongs to the DapA family. Homotetramer; dimer of dimers.

It is found in the cytoplasm. It catalyses the reaction L-aspartate 4-semialdehyde + pyruvate = (2S,4S)-4-hydroxy-2,3,4,5-tetrahydrodipicolinate + H2O + H(+). It functions in the pathway amino-acid biosynthesis; L-lysine biosynthesis via DAP pathway; (S)-tetrahydrodipicolinate from L-aspartate: step 3/4. In terms of biological role, catalyzes the condensation of (S)-aspartate-beta-semialdehyde [(S)-ASA] and pyruvate to 4-hydroxy-tetrahydrodipicolinate (HTPA). This Yersinia pseudotuberculosis serotype I (strain IP32953) protein is 4-hydroxy-tetrahydrodipicolinate synthase.